Reading from the N-terminus, the 170-residue chain is MSVLQVLHYPDERLRKIAAPVKEVNGEIQRIVDDMFETMYAEEGIGLAATQVDVHQQIIVIDISENRDQRLVLINPELLEKSGETGIEEGCLSIPEQRALVPRAEKVKIRALDRDGKPFELETDGLLAICIQHEMDHLIGKLFVDYLSPLKRQRIRQKLEKMAKLNARAN.

Positions 91 and 133 each coordinate Fe cation. The active site involves Glu134. His137 provides a ligand contact to Fe cation.

The protein belongs to the polypeptide deformylase family. Requires Fe(2+) as cofactor.

It catalyses the reaction N-terminal N-formyl-L-methionyl-[peptide] + H2O = N-terminal L-methionyl-[peptide] + formate. In terms of biological role, removes the formyl group from the N-terminal Met of newly synthesized proteins. Requires at least a dipeptide for an efficient rate of reaction. N-terminal L-methionine is a prerequisite for activity but the enzyme has broad specificity at other positions. In Yersinia pseudotuberculosis serotype O:1b (strain IP 31758), this protein is Peptide deformylase.